A 243-amino-acid chain; its full sequence is tRNA (guanine-N(7)-)-methyltransferase (243 aa).

Residues Glu-74, Glu-99, Asp-126, and Asp-149 each contribute to the S-adenosyl-L-methionine site. Asp-149 is an active-site residue. Substrate is bound by residues Lys-153, Asp-185, and 221 to 224 (TKFE).

Belongs to the class I-like SAM-binding methyltransferase superfamily. TrmB family.

It carries out the reaction guanosine(46) in tRNA + S-adenosyl-L-methionine = N(7)-methylguanosine(46) in tRNA + S-adenosyl-L-homocysteine. Its pathway is tRNA modification; N(7)-methylguanine-tRNA biosynthesis. In terms of biological role, catalyzes the formation of N(7)-methylguanine at position 46 (m7G46) in tRNA. The polypeptide is tRNA (guanine-N(7)-)-methyltransferase (Psychromonas ingrahamii (strain DSM 17664 / CCUG 51855 / 37)).